The following is a 375-amino-acid chain: Probable RNA 3'-terminal phosphate cyclase-like protein (375 aa).

The protein belongs to the RNA 3'-terminal cyclase family. Type 2 subfamily.

It is found in the nucleus. The protein resides in the nucleolus. Functionally, does not have cyclase activity. Plays a role in 40S-ribosomal-subunit biogenesis in the early pre-rRNA processing steps at sites A0, A1 and A2 that are required for proper maturation of the 18S RNA. This Arabidopsis thaliana (Mouse-ear cress) protein is Probable RNA 3'-terminal phosphate cyclase-like protein.